Here is a 253-residue protein sequence, read N- to C-terminus: UPF0246 protein lhv_1883 (253 aa).

This sequence belongs to the UPF0246 family.

In Lactobacillus helveticus (strain DPC 4571), this protein is UPF0246 protein lhv_1883.